A 165-amino-acid chain; its full sequence is Large ribosomal subunit protein uL10 (165 aa).

This sequence belongs to the universal ribosomal protein uL10 family. In terms of assembly, part of the ribosomal stalk of the 50S ribosomal subunit. The N-terminus interacts with L11 and the large rRNA to form the base of the stalk. The C-terminus forms an elongated spine to which L12 dimers bind in a sequential fashion forming a multimeric L10(L12)X complex.

Its function is as follows. Forms part of the ribosomal stalk, playing a central role in the interaction of the ribosome with GTP-bound translation factors. This chain is Large ribosomal subunit protein uL10, found in Salmonella agona (strain SL483).